The primary structure comprises 227 residues: [D-Ala2]-deltorphins (227 aa).

The signal sequence occupies residues 1 to 20 (MSFLKKSLLLVLFLGLVSHS). A propeptide spanning residues 21–46 (VCKEEKRETEEENENEEENHEVGSEM) is cleaved from the precursor. The tract at residues 22–227 (CKEEKRETEE…DVVGGEAKKM (206 aa)) is disordered. The segment covering 30-39 (EEENENEEEN) has biased composition (acidic residues). A D-alanine (Ala) modification is found at Ala50. Residues 57–75 (DTEEKNENEEENQEEGSEM) constitute a propeptide that is removed on maturation. A compositionally biased stretch (acidic residues) spans 62–72 (NENEEENQEEG). Residues 73-87 (SEMKRYAFGYPKREP) show a composition bias toward basic and acidic residues. Ala79 is subject to D-alanine (Ala). A propeptide spanning residues 86–104 (EPEEENENEEENHEEGSEM) is cleaved from the precursor. Acidic residues predominate over residues 88 to 98 (EEENENEEENH). Over residues 99-108 (EEGSEMKRYA) the composition is skewed to basic and acidic residues. A D-alanine (Ala) modification is found at Ala108. The residue at position 113 (Gly113) is a Glycine amide. Residues 115–140 (EAKKMKREPEEENENEEENHEEGSEM) constitute a propeptide that is removed on maturation. The segment covering 124 to 134 (EEENENEEENH) has biased composition (acidic residues). Residues 135–144 (EEGSEMKRYA) show a composition bias toward basic and acidic residues. Ala144 bears the D-alanine (Ala) mark. Gly149 is subject to Glycine amide. A propeptide spanning residues 151–176 (EAKKMKREPEEENENEEENHEEGSEM) is cleaved from the precursor. The span at 160 to 170 (EEENENEEENH) shows a compositional bias: acidic residues. Residues 171–180 (EEGSEMKRYA) are compositionally biased toward basic and acidic residues. At Ala180 the chain carries D-alanine (Ala). Glycine amide is present on Gly185. Positions 187–212 (EAKKMKREPEEENENEEENHEEGSEM) are excised as a propeptide. The span at 196–206 (EEENENEEENH) shows a compositional bias: acidic residues. Residues 207–216 (EEGSEMKRYA) show a composition bias toward basic and acidic residues. Position 216 is a D-alanine (Ala) (Ala216). Gly221 bears the Glycine amide mark. A propeptide spanning residues 223 to 227 (EAKKM) is cleaved from the precursor.

The protein belongs to the frog skin active peptide (FSAP) family. Dermorphin subfamily. In terms of tissue distribution, expressed by the skin glands.

The protein localises to the secreted. In terms of biological role, deltorphin is a heptapeptide with a very potent opiate-like activity. Has high affinity and selectivity for delta-type opioid receptors. The two dermorphin-like peptides have a similar affinity and selectivity for the mu opioid receptor as dermorphin. The polypeptide is [D-Ala2]-deltorphins (Phyllomedusa bicolor (Two-colored leaf frog)).